A 389-amino-acid chain; its full sequence is Probable peptide chain release factor 1, mitochondrial (389 aa).

At glutamine 259 the chain carries N5-methylglutamine.

This sequence belongs to the prokaryotic/mitochondrial release factor family. Post-translationally, methylation of glutamine in the GGQ triplet is conserved from bacteria to mammals.

The protein localises to the mitochondrion. In terms of biological role, mitochondrial peptide chain release factor that directs the termination of translation in response to the peptide chain termination codons UAA and UAG. In Caenorhabditis elegans, this protein is Probable peptide chain release factor 1, mitochondrial.